The following is an 826-amino-acid chain: Arsenite oxidase subunit AioA (826 aa).

[3Fe-4S] cluster contacts are provided by cysteine 22, cysteine 25, and cysteine 29. Substrate contacts are provided by histidine 196, glutamate 204, arginine 419, and histidine 423.

It belongs to the prokaryotic molybdopterin-containing oxidoreductase family. In terms of assembly, heterodimer consisting of a large and a small subunit. [3Fe-4S] cluster is required as a cofactor. It depends on Mo-bis(molybdopterin guanine dinucleotide) as a cofactor.

The catalysed reaction is 2 oxidized [azurin] + arsenite + H2O = 2 reduced [azurin] + arsenate + 3 H(+). In terms of biological role, involved in the detoxification of arsenic. Oxidizes As(III)O3(3-) (arsenite) to the somewhat less toxic As(V)O4(3-) (arsenate). This chain is Arsenite oxidase subunit AioA (aioA), found in Herminiimonas arsenicoxydans.